We begin with the raw amino-acid sequence, 144 residues long: Putative pre-16S rRNA nuclease (144 aa).

The protein belongs to the YqgF nuclease family.

Its subcellular location is the cytoplasm. In terms of biological role, could be a nuclease involved in processing of the 5'-end of pre-16S rRNA. The chain is Putative pre-16S rRNA nuclease from Prochlorococcus marinus (strain NATL1A).